The chain runs to 300 residues: uncharacterized protein (300 aa).

The first 22 residues, 1–22, serve as a signal peptide directing secretion; the sequence is MKSFVWTLLGALSLGSLTTAYG.

Its subcellular location is the endoplasmic reticulum. This is an uncharacterized protein from Schizosaccharomyces pombe (strain 972 / ATCC 24843) (Fission yeast).